A 461-amino-acid chain; its full sequence is 23S rRNA (uracil(1939)-C(5))-methyltransferase RlmD (461 aa).

A disordered region spans residues 1–26 (MAKHERGLRFQPTGGSKAPQIPTGKK). A TRAM domain is found at 20–78 (QIPTGKKQRLSIERLANDGRGIAFFEGKTWFVLGALAGEEVEARVLGAHGKVVEARTER). Positions 91, 97, 100, and 179 each coordinate [4Fe-4S] cluster. Glutamine 283, phenylalanine 312, asparagine 317, glutamate 333, aspartate 360, and aspartate 381 together coordinate S-adenosyl-L-methionine. Cysteine 407 (nucleophile) is an active-site residue.

Belongs to the class I-like SAM-binding methyltransferase superfamily. RNA M5U methyltransferase family. RlmD subfamily.

The enzyme catalyses uridine(1939) in 23S rRNA + S-adenosyl-L-methionine = 5-methyluridine(1939) in 23S rRNA + S-adenosyl-L-homocysteine + H(+). Functionally, catalyzes the formation of 5-methyl-uridine at position 1939 (m5U1939) in 23S rRNA. This chain is 23S rRNA (uracil(1939)-C(5))-methyltransferase RlmD, found in Pseudomonas fluorescens (strain Pf0-1).